Here is an 810-residue protein sequence, read N- to C-terminus: Transmembrane GTPase Marf (810 aa).

Residues 1-637 (MAAYLNRTIS…TTTPVEATPV (637 aa)) are Cytoplasmic-facing. Thr-8 carries the phosphothreonine modification. The segment at 13 to 40 (TGQTGPADDDRHASSTDTVDKSGPGSPL) is disordered. A compositionally biased stretch (basic and acidic residues) spans 20 to 32 (DDDRHASSTDTVD). Ser-38 carries the phosphoserine modification. The Dynamin-type G domain maps to 134 to 382 (QRDHMKVAFF…IRYFEFQDFE (249 aa)). The interval 144 to 151 (GRTSNGKS) is G1 motif. 147-152 (SNGKSS) lines the GTP pocket. The interval 170–171 (TT) is G2 motif. The segment at 239-242 (DSPG) is G3 motif. 298–301 (NRWD) is a GTP binding site. Positions 298-301 (NRWD) are G4 motif. A region of interest (G5 motif) is located at residue Lys-327. Ser-345 provides a ligand contact to GTP. Residues 427–476 (RNLKQDQKNLLTERIQGTETQMMQVTREMKMKIHNMVEEVEEKVSKALNE) are a coiled coil. Phosphothreonine is present on Thr-553. Ser-554 carries the phosphoserine modification. Thr-555 is subject to Phosphothreonine. Residues 609 to 630 (GQPALVNRQSSIGHSVSTPTTT) are disordered. Residues 638–648 (CLLPAPVVAGI) form a helical membrane-spanning segment. The Mitochondrial intermembrane segment spans residues 649–668 (TPEQLSLISRFAVSSIGSQG). A helical membrane pass occupies residues 669–689 (TVGGLVVAGVMLKTIGWRVLV). Topologically, residues 690 to 810 (GVGALYGCIY…IFEHNYISPQ (121 aa)) are cytoplasmic. The stretch at 759-806 (TATTDMNDELKTLDSQLNILEANQKQLKLLRNKANYIQNELDIFEHNY) forms a coiled coil.

It belongs to the TRAFAC class dynamin-like GTPase superfamily. Dynamin/Fzo/YdjA family. Mitofusin subfamily. In terms of assembly, interacts with Mul1. Post-translationally, ubiquitinated by park and Mul1. Ubiquitinated, probably by HUWE1, when dietary stearate (C18:0) levels are low; ubiquitination inhibits mitochondrial fusion. In terms of tissue distribution, widely expressed in embryos, accumulating in the mesoderm and endoderm during gut development. In the male germ line, it is expressed in spermatogonia, spermatocytes and early spermatids.

It is found in the mitochondrion outer membrane. The enzyme catalyses GTP + H2O = GDP + phosphate + H(+). Its function is as follows. Mitochondrial outer membrane GTPase that mediates mitochondrial clustering and fusion. Mitochondrial fusion is the physical merging of mitochondria that gives rise to mitochondrial networks, and this process is counterbalanced by mitochondrial fission which fragments networks. Promotes, but is not required for park recruitment to dysfunctional mitochondria. The polypeptide is Transmembrane GTPase Marf (Marf) (Drosophila melanogaster (Fruit fly)).